A 514-amino-acid polypeptide reads, in one-letter code: Protein spinster homolog 3 (514 aa).

Residues 1–22 are disordered; the sequence is MSTECLKPQTGGPQSQSLSQGG. Over residues 9-21 the composition is skewed to low complexity; the sequence is QTGGPQSQSLSQG. A run of 12 helical transmembrane segments spans residues 54–74, 88–108, 116–136, 149–169, 176–196, 212–232, 264–284, 313–333, 347–367, 376–396, 415–435, and 453–473; these read VLCY…GVLL, GLLQ…FGYL, AILS…SFIS, FVGT…GDLF, CALA…YVLG, LMPC…PDVP, FVFS…LGFW, LIFG…GAEA, LICA…LILA, VFLA…ADIL, VAHV…SSVL, and SFLC…LTAL. The interval 482-514 is disordered; the sequence is ARQPGKGTLDSKDIASRNTESQGLLSGTSTPTE. Residues 497–514 are compositionally biased toward polar residues; the sequence is SRNTESQGLLSGTSTPTE.

Belongs to the major facilitator superfamily. Spinster (TC 2.A.1.49) family.

It localises to the membrane. Sphingolipid transporter. This Mus musculus (Mouse) protein is Protein spinster homolog 3 (Spns3).